A 969-amino-acid polypeptide reads, in one-letter code: Protein translocase subunit SecA (969 aa).

ATP contacts are provided by residues glutamine 99, 117–121, and aspartate 631; that span reads GEGKT.

This sequence belongs to the SecA family. In terms of assembly, monomer and homodimer. Part of the essential Sec protein translocation apparatus which comprises SecA, SecYEG and auxiliary proteins SecDF. Other proteins may also be involved.

The protein localises to the cell inner membrane. Its subcellular location is the cytoplasm. The catalysed reaction is ATP + H2O + cellular proteinSide 1 = ADP + phosphate + cellular proteinSide 2.. In terms of biological role, part of the Sec protein translocase complex. Interacts with the SecYEG preprotein conducting channel. Has a central role in coupling the hydrolysis of ATP to the transfer of proteins into and across the cell membrane, serving as an ATP-driven molecular motor driving the stepwise translocation of polypeptide chains across the membrane. The sequence is that of Protein translocase subunit SecA from Chlamydia felis (strain Fe/C-56) (Chlamydophila felis).